We begin with the raw amino-acid sequence, 253 residues long: Ribosome-inactivating protein saporin-7 (253 aa).

The active site involves E176.

This sequence belongs to the ribosome-inactivating protein family. Type 1 RIP subfamily.

The enzyme catalyses Endohydrolysis of the N-glycosidic bond at one specific adenosine on the 28S rRNA.. Its function is as follows. Ribosome-inactivating protein of type 1, inhibits protein synthesis in animal cells. In Saponaria officinalis (Common soapwort), this protein is Ribosome-inactivating protein saporin-7 (SAP7).